A 959-amino-acid chain; its full sequence is Bifunctional premutilin synthase (959 aa).

Residues 1-542 (MGLSEDLHAR…ALNVPIPRFD (542 aa)) are class II diterpene cyclase. Positions 309–312 (DADM) match the DXDD motif motif. Aspartate 311 acts as the For class II diterpene cyclase activity in catalysis. A class I diterpene synthase region spans residues 543–959 (PASITTLPPI…TANGSNGIHH (417 aa)). Catalysis depends on aspartate 649, which acts as the For class I diterpene synthase activity. Aspartate 649, aspartate 653, and asparagine 824 together coordinate Mg(2+). Residues 649–653 (DDYLD) carry the DDXXD motif motif. A disordered region spans residues 931-959 (KGANGVKKTNGLTTNGTKATANGSNGIHH). A compositionally biased stretch (low complexity) spans 934–959 (NGVKKTNGLTTNGTKATANGSNGIHH).

This sequence belongs to the terpene synthase family. Mg(2+) serves as cofactor.

The protein operates within secondary metabolite biosynthesis; terpenoid biosynthesis. Functionally, bifunctional premutilin synthase; part of the gene cluster that mediates the biosynthesis of pleuromutilin, a tricyclic diterpene showing antibacterial properties. The geranylgeranyl diphosphate (GGPP) synthase ple4 catalyzes the first step in pleuromutilin biosynthesis. GGPP is then substrate of the premutilin synthase (PS) ple3 to yield premutilin. Premutilin synthase is a bifunctional enzyme composed of the fusion of a class II diterpene cyclase (DTC) and a class I diterpene synthase (DTS), with the corresponding domains and active sites containing characteristic aspartate-rich motifs. GGPP is first converted to mutildienyl-diphosphate (MPP) at the class II DTC site. MPP is subsequently further cyclized at the class I DTS site, followed by a 1,5-hydride shift and addition of water prior to terminating deprotonation, to yield premutilin. The cytochrome P450 monooxygenases ple5 and ple6 hydroxylate premutilin at C-11 and C-3, respectively, producing 11-hydroxypremutilin and 3-hydroxypremutilin. The combination of the actions of both ple5 and ple6 leads to the production of 3,11-dihydroxypremutilin. The short chain dehydrogenase ple7 further converts 3,11-dihydroxypremutilin into mutilin. The acetyltransferase ple2 then acetylates mutilin to produce 14-O-acetylmutilin. Finally, the cytochrome P450 monooxygenase ple1 catalyzes hydroxylation on the alpha position of the acetyl side chain of 14-O-acetylmutilin to yield pleuromutilin. This chain is Bifunctional premutilin synthase, found in Rhodocybe pseudopiperita (Clitopilus pseudopiperitus).